The primary structure comprises 241 residues: Class B acid phosphatase (241 aa).

The first 27 residues, 1 to 27, serve as a signal peptide directing secretion; it reads MFITTKKSLIALVLATAGLISSPVSFA. The active-site Nucleophile is aspartate 72. 2 residues coordinate Mg(2+): aspartate 72 and aspartate 74. Aspartate 74 (proton donor) is an active-site residue. Residues 141-142 and lysine 181 each bind substrate; that span reads TG. Mg(2+) is bound at residue aspartate 196.

It belongs to the class B bacterial acid phosphatase family. Homotetramer. Requires Mg(2+) as cofactor.

It localises to the periplasm. The catalysed reaction is a phosphate monoester + H2O = an alcohol + phosphate. In terms of biological role, dephosphorylates several organic phosphate monoesters. Also has a phosphotransferase activity catalyzing the transfer of low-energy phosphate groups from organic phosphate monoesters to free hydroxyl groups of various organic compounds. This chain is Class B acid phosphatase, found in Edwardsiella ictaluri (strain 93-146).